We begin with the raw amino-acid sequence, 152 residues long: Biogenesis of lysosome-related organelles complex 1 subunit 1 (152 aa).

The protein belongs to the BLOC1S1 family. In terms of assembly, component of the biogenesis of lysosome-related organelles complex-1 (BLOC-1). Interacts with BLOS2 and SNX1. Expressed in the whole plant (at protein level).

The protein resides in the cytoplasm. It localises to the endosome. In terms of biological role, component of the biogenesis of lysosome-related organelles complex-1 (BLOC-1), a complex that mediates the vacuolar degradative transport via the intracellular vesicle trafficking from the endosome to the vacuole. Probably regulates the PIN1 and PIN2 homeostasis through its interaction with SNX1. This chain is Biogenesis of lysosome-related organelles complex 1 subunit 1 (BLOS1), found in Arabidopsis thaliana (Mouse-ear cress).